A 425-amino-acid chain; its full sequence is COBRA-like protein 4 (425 aa).

The N-terminal stretch at 1–27 is a signal peptide; sequence MAIGVGGCCAVLLAAALLFSSPATTYA. N-linked (GlcNAc...) asparagine glycans are attached at residues N36, N163, N171, N319, and N352.

The protein belongs to the COBRA family.

This chain is COBRA-like protein 4 (BC1L9), found in Oryza sativa subsp. japonica (Rice).